The following is a 381-amino-acid chain: MIISASTDYRAAAQRKLPPFLFHYIDGGAYNEQTLRRNTADLADIALRQRVLKNMSELSLETQLFGETQAMPVVLGPVGLSGMYARRGEVQAARAADKKGIPFTLSTLSVCPIEEVAPAIARPMWFQLYVLKDRGFMRNALTRAQAAGVKTLVFTVDMPVPGARYRDAHSGMSGPNAAARRLLQAIAHPQWAWDVGLNGKPHDLGNISAYLGKPTTLEDYMGWIATNFDPSISWKDLEWVREFWQGPMIIKGILDPEDAKDAVKFGADGIVVSNHGGRQLDGVLSTARALPAIADAVKGDITILADSGIRTGLDVVRMIALGADSVLLGRAFVYALATAGEAGVINLLTLIEQEMRVAMTLTGAKRIADINRDSLAVSERG.

In terms of domain architecture, FMN hydroxy acid dehydrogenase spans 1 to 380; the sequence is MIISASTDYR…NRDSLAVSER (380 aa). Y24 contacts substrate. The FMN site is built by S106 and Q127. Position 129 (Y129) interacts with substrate. T155 serves as a coordination point for FMN. Residue R164 participates in substrate binding. Position 251 (K251) interacts with FMN. Residue H275 is the Proton acceptor of the active site. Substrate is bound at residue R278. 306–330 contacts FMN; that stretch reads DSGIRTGLDVVRMIALGADSVLLGR.

Belongs to the FMN-dependent alpha-hydroxy acid dehydrogenase family. Requires FMN as cofactor.

The protein resides in the cell inner membrane. It carries out the reaction (S)-lactate + A = pyruvate + AH2. Catalyzes the conversion of L-lactate to pyruvate. Is coupled to the respiratory chain. The protein is L-lactate dehydrogenase of Yersinia pseudotuberculosis serotype O:1b (strain IP 31758).